We begin with the raw amino-acid sequence, 90 residues long: Small ribosomal subunit protein bS16 (90 aa).

This sequence belongs to the bacterial ribosomal protein bS16 family.

In Lysinibacillus sphaericus (strain C3-41), this protein is Small ribosomal subunit protein bS16.